The chain runs to 1311 residues: Zinc finger protein 423 (1311 aa).

A compositionally biased stretch (basic residues) spans 1 to 11; it reads MSRRKQAKPRS. Disordered stretches follow at residues 1 to 21, 34 to 70, and 95 to 123; these read MSRRKQAKPRSVKVEEGEASD, GGLEGESECDRKSSRALEDRNSVTSQEERNEDDEDVE, and AHRCPGDGDDDPQLSWVASSPSSKDVASP. Residues 41 to 54 show a composition bias toward basic and acidic residues; the sequence is ECDRKSSRALEDRN. Phosphoserine is present on residues Ser55 and Ser58. The C2H2-type 1; degenerate zinc-finger motif lies at 75-101; it reads YTCDHCQQDFESLADLTDHRAHRCPGD. Residues 110-123 are compositionally biased toward polar residues; that stretch reads WVASSPSSKDVASP. 7 consecutive C2H2-type zinc fingers follow at residues 146–168, 174–196, 202–224, 230–252, 271–294, 303–326, and 331–353; these read YPCQFCDKSFIRLSYLKRHEQIH, FKCTFCSRLFKHKRSRDRHIKLH, YHCHECEAAFSRRDHLKIHLKTH, FKCSVCKRGFSSTSSLQSHMQAH, FMCDYCEDTFSQTEELEKHVLTLH, LQCIHCPEVFVDESTLLAHIHQAH, and HKCPMCPEQFSSVEGVYCHLDSH. The tract at residues 354 to 426 is disordered; sequence RQPDSSNHSV…PLRGQKKMRD (73 aa). Positions 373 to 382 are enriched in polar residues; that stretch reads ASMSSATPDS. Residues 390–404 are compositionally biased toward low complexity; the sequence is SVASMSSATPDSSAS. The C2H2-type 9; degenerate zinc finger occupies 436–460; the sequence is YSCPYCSKRDFTSLAVLEIHLKTIH. 3 C2H2-type zinc fingers span residues 468-491, 507-530, and 544-567; these read HTCQICLDSMPTLYNLNEHVRKLH, FHCNYCPEMFADINSLQEHIRVSH, and FFCNQCSMGFLTESSLTEHIQQAH. Residues 590-615 form a C2H2-type 13; atypical zinc finger; sequence YSCPYCTNSPIFGSILKLTKHIKENH. A disordered region spans residues 617-654; it reads NIPLAHSKKSKAEQSPVSSDVEVSSPKRQRLSGSANSI. Phosphoserine is present on Ser631. Over residues 631-642 the composition is skewed to low complexity; it reads SPVSSDVEVSSP. C2H2-type zinc fingers lie at residues 659 to 681, 689 to 711, 719 to 742, 747 to 770, 777 to 800, 808 to 830, and 834 to 857; these read YPCNQCDLKFSNFESFQTHLKLH, QACPQCKEDFDSQESLLQHLTVH, YVCESCDKQFSSVDDLQKHLLDMH, YHCTLCQEVFDSKVSIQVHLAVKH, YRCTACNWDFRKEADLQVHVKHSH, HKCIFCGETFSTEVELQCHITTH, and YNCRFCSKAFHAVLLLEKHLREKH. A C2H2-type 21; degenerate zinc finger spans residues 913–935; that stretch reads YGCDICGAAYTMEVLLQNHRLRD. 3 C2H2-type zinc fingers span residues 957 to 979, 986 to 1008, and 1047 to 1069; these read HKCNVCSRTFFSENGLREHLQTH, YMCPICGERFPSLLTLTEHKVTH, and FRCVVCMQTVTSTLELKIHGTFH. At Ser1081 the chain carries Phosphoserine. The segment at 1091 to 1109 adopts a C2H2-type 25; degenerate zinc-finger fold; it reads YKCALCLKEFRSKQDLVRL. C2H2-type zinc fingers lie at residues 1147-1170, 1195-1217, 1225-1247, 1256-1279, and 1286-1309; these read LRCPECNVKFESAEDLESHMQVDH, YQCIKCQMTFENEREIQIHVANH, HECKLCNQMFDSPAKLLCHLIEH, FKCPVCFTVFVQANKLQQHIFAVH, and YDCSQCPQKFFFQTELQNHTMSQH. Positions 1163–1174 are enriched in basic and acidic residues; that stretch reads ESHMQVDHRDLT. The tract at residues 1163–1190 is disordered; sequence ESHMQVDHRDLTPETSGPRKGAQTSPVP.

It belongs to the krueppel C2H2-type zinc-finger protein family. Homodimer. Interacts with PARP1, SMAD1 and SMAD4. Interacts with EBF1. Interacts with CEP290. In terms of tissue distribution, expressed in brain, eye, olfactory epithelium, spleen and heart. Expressed in the basal layer, consisting of neural precursor cells and immature sensory neurons of the olfactory epithelium, but not in the mature receptor cells.

The protein resides in the nucleus. Transcription factor that can both act as an activator or a repressor depending on the context. Plays a central role in BMP signaling and olfactory neurogenesis. Associates with SMADs in response to BMP2 leading to activate transcription of BMP target genes. Acts as a transcriptional repressor via its interaction with EBF1, a transcription factor involved in terminal olfactory receptor neurons differentiation; this interaction preventing EBF1 to bind DNA and activate olfactory-specific genes. Involved in olfactory neurogenesis by participating in a developmental switch that regulates the transition from differentiation to maturation in olfactory receptor neurons. Controls proliferation and differentiation of neural precursors in cerebellar vermis formation. The chain is Zinc finger protein 423 (Znf423) from Rattus norvegicus (Rat).